The following is a 171-amino-acid chain: Shikimate kinase (171 aa).

14-19 is an ATP binding site; that stretch reads GAGKST. Ser-18 serves as a coordination point for Mg(2+). Substrate-binding residues include Asp-36, Arg-60, and Gly-82. Arg-120 serves as a coordination point for ATP. Arg-139 is a binding site for substrate. Gln-156 lines the ATP pocket.

It belongs to the shikimate kinase family. As to quaternary structure, monomer. Mg(2+) serves as cofactor.

It localises to the cytoplasm. The catalysed reaction is shikimate + ATP = 3-phosphoshikimate + ADP + H(+). It participates in metabolic intermediate biosynthesis; chorismate biosynthesis; chorismate from D-erythrose 4-phosphate and phosphoenolpyruvate: step 5/7. Catalyzes the specific phosphorylation of the 3-hydroxyl group of shikimic acid using ATP as a cosubstrate. The sequence is that of Shikimate kinase from Shewanella putrefaciens (strain CN-32 / ATCC BAA-453).